The primary structure comprises 451 residues: Putative gluconeogenesis factor (451 aa).

The protein belongs to the gluconeogenesis factor family.

The protein localises to the cytoplasm. Functionally, required for morphogenesis under gluconeogenic growth conditions. This Clostridium acetobutylicum (strain ATCC 824 / DSM 792 / JCM 1419 / IAM 19013 / LMG 5710 / NBRC 13948 / NRRL B-527 / VKM B-1787 / 2291 / W) protein is Putative gluconeogenesis factor.